Here is a 584-residue protein sequence, read N- to C-terminus: ATP-dependent lipid A-core flippase (584 aa).

Helical transmembrane passes span 15-35 (LLGYLLGYWKVLLLSMLSMAV), 63-83 (IMWVPLAIIGIYLIRGLAGFI), 153-173 (LGMLGLMLTTDWQLTLICLVV), 251-271 (TGVTQLMIACALAAILYFAGL), and 277-297 (GLTAGDFMVFLTAMLGLFAPV). In terms of domain architecture, ABC transmembrane type-1 spans 27 to 309 (LLSMLSMAVA…ISSVSQAMQR (283 aa)). In terms of domain architecture, ABC transporter spans 341 to 576 (LSFDAVSFAY…GGLYARLHSL (236 aa)). Residue 375 to 382 (GSSGSGKT) coordinates ATP.

This sequence belongs to the ABC transporter superfamily. Lipid exporter (TC 3.A.1.106) family. Homodimer.

The protein localises to the cell inner membrane. It catalyses the reaction ATP + H2O + lipid A-core oligosaccharideSide 1 = ADP + phosphate + lipid A-core oligosaccharideSide 2.. Functionally, involved in lipopolysaccharide (LPS) biosynthesis. Translocates lipid A-core from the inner to the outer leaflet of the inner membrane. Transmembrane domains (TMD) form a pore in the inner membrane and the ATP-binding domain (NBD) is responsible for energy generation. The chain is ATP-dependent lipid A-core flippase from Chromobacterium violaceum (strain ATCC 12472 / DSM 30191 / JCM 1249 / CCUG 213 / NBRC 12614 / NCIMB 9131 / NCTC 9757 / MK).